We begin with the raw amino-acid sequence, 136 residues long: Probable disulfide formation protein (136 aa).

The helical transmembrane segment at 7-26 threads the bilayer; sequence NNALYFAWLICSTGTVMSIY. A disulfide bond links Cys-36 and Cys-39. Helical transmembrane passes span 41-60 and 67-84; these read YQRICLFPLSIILGIATYRE and YALPLSITGMVIAVYQIC. Residues Cys-96 and Cys-101 are joined by a disulfide bond. The chain crosses the membrane as a helical span at residues 109–133; the sequence is GFITVPMASALAFCAISCLLILSGS.

Belongs to the DsbB family. BdbC subfamily.

The protein resides in the cell inner membrane. Functionally, required for disulfide bond formation in some proteins. This chain is Probable disulfide formation protein, found in Chlamydia caviae (strain ATCC VR-813 / DSM 19441 / 03DC25 / GPIC) (Chlamydophila caviae).